We begin with the raw amino-acid sequence, 203 residues long: Thymidylate kinase (203 aa).

9–16 (GPEGAGKT) is a binding site for ATP.

It belongs to the thymidylate kinase family.

The catalysed reaction is dTMP + ATP = dTDP + ADP. Its function is as follows. Phosphorylation of dTMP to form dTDP in both de novo and salvage pathways of dTTP synthesis. The sequence is that of Thymidylate kinase from Staphylococcus epidermidis (strain ATCC 35984 / DSM 28319 / BCRC 17069 / CCUG 31568 / BM 3577 / RP62A).